The chain runs to 432 residues: MANVVVIGAQWGDEGKGKVVDIYTEFADNVVRYQGGNNAGHTLVVGDEKVILHLIPSGILHEGKRCVIGNGVVLDPEVFIMEITKLKANGYLKDDKMLLLSEALHIIMPYHKRIDIAREKKSGSKKIGTTGRGIGPAYEDKIGRRGIRLMDLLDEKAFTRKVKEVLEEKNLILTQLLGDQPFTFEEIYEEYMKYAETLRKYAADTSLILHQETKAGKSLLFEGAQGTLLDVDHGTYPYVTSSSTCSGGACTGSGVSPREIHEVIGISKAYATRVGSGPFPTELEDETGEQLRQAGREFGSTTGRPRRTGWYDALVARYAVRVNGLSGIAITKLDVLSGQETVKVCTAYNYKGQVLTEVPASLEIMEQCTPIYEELPGWNDDITGAKSMAELPKNARDYVARIEKLSGAPVVLVSVGPRRDETIVLRNPFELN.

GTP-binding positions include 12 to 18 (GDEGKGK) and 40 to 42 (GHT). The active-site Proton acceptor is Asp13. Residues Asp13 and Gly40 each contribute to the Mg(2+) site. IMP is bound by residues 13–16 (DEGK), 38–41 (NAGH), Thr130, Arg144, Gln225, Thr240, and Arg304. His41 serves as the catalytic Proton donor. 300–306 (STTGRPR) serves as a coordination point for substrate. Residues Arg306, 332-334 (KLD), and 414-416 (SVG) each bind GTP.

Belongs to the adenylosuccinate synthetase family. In terms of assembly, homodimer. Requires Mg(2+) as cofactor.

Its subcellular location is the cytoplasm. It carries out the reaction IMP + L-aspartate + GTP = N(6)-(1,2-dicarboxyethyl)-AMP + GDP + phosphate + 2 H(+). Its pathway is purine metabolism; AMP biosynthesis via de novo pathway; AMP from IMP: step 1/2. Its function is as follows. Plays an important role in the de novo pathway of purine nucleotide biosynthesis. Catalyzes the first committed step in the biosynthesis of AMP from IMP. This Citrifermentans bemidjiense (strain ATCC BAA-1014 / DSM 16622 / JCM 12645 / Bem) (Geobacter bemidjiensis) protein is Adenylosuccinate synthetase.